Reading from the N-terminus, the 295-residue chain is Acetylglutamate kinase (295 aa).

Substrate is bound by residues 64 to 65 (GG), arginine 86, and asparagine 190.

This sequence belongs to the acetylglutamate kinase family. ArgB subfamily.

Its subcellular location is the cytoplasm. The enzyme catalyses N-acetyl-L-glutamate + ATP = N-acetyl-L-glutamyl 5-phosphate + ADP. Its pathway is amino-acid biosynthesis; L-arginine biosynthesis; N(2)-acetyl-L-ornithine from L-glutamate: step 2/4. Functionally, catalyzes the ATP-dependent phosphorylation of N-acetyl-L-glutamate. This chain is Acetylglutamate kinase, found in Heliobacterium modesticaldum (strain ATCC 51547 / Ice1).